Here is a 534-residue protein sequence, read N- to C-terminus: Dual specificity calcium/calmodulin-dependent 3',5'-cyclic nucleotide phosphodiesterase 1B (534 aa).

The tract at residues 1-21 (MELSPRSPPEMLESDCPSPLE) is disordered. A phosphoserine mark is found at Ser-7 and Ser-14. Calmodulin-binding regions lie at residues 27 to 47 (SKKMWIKLRSLLRYMVKQLEN) and 116 to 139 (EKPKFRSIVHAVQAGIFVERMFRR). The 358-residue stretch at 144 to 501 (VGPTYSTAVL…QKWKERAASG (358 aa)) folds into the PDEase domain. Catalysis depends on His-221, which acts as the Proton donor. Positions 225, 261, 262, and 368 each coordinate Zn(2+). Asp-262 serves as a coordination point for Mg(2+). Disordered regions lie at residues 442–473 (VQPTGDDDSKSKNQPSFQWRQPSLDVEVGDPN) and 494–534 (WKER…GNLD). The span at 453-462 (KNQPSFQWRQ) shows a compositional bias: polar residues. Phosphoserine is present on residues Ser-464 and Ser-512.

Belongs to the cyclic nucleotide phosphodiesterase family. PDE1 subfamily. As to quaternary structure, homodimer. The cofactor is Zn(2+). Mg(2+) is required as a cofactor. Expressed in central nervous system regions. Most abundant in basal ganglia. Also found in kidney papilla and adrenal medulla.

Its subcellular location is the cytoplasm. It is found in the cytosol. The enzyme catalyses a nucleoside 3',5'-cyclic phosphate + H2O = a nucleoside 5'-phosphate + H(+). The catalysed reaction is 3',5'-cyclic GMP + H2O = GMP + H(+). It carries out the reaction 3',5'-cyclic AMP + H2O = AMP + H(+). With respect to regulation, type I PDE are activated by the binding of calmodulin in the presence of Ca(2+). Cyclic nucleotide phosphodiesterase with a dual specificity for the second messengers cAMP and cGMP, which are key regulators of many important physiological processes. Has a preference for cGMP as a substrate. The polypeptide is Dual specificity calcium/calmodulin-dependent 3',5'-cyclic nucleotide phosphodiesterase 1B (Bos taurus (Bovine)).